The primary structure comprises 1671 residues: Hybrid signal transduction protein dokA (1671 aa).

A compositionally biased stretch (basic and acidic residues) spans Met-1 to Ser-10. 6 disordered regions span residues Met-1–Gly-27, Asp-42–Asp-89, Gln-126–Ser-241, Tyr-365–Glu-451, His-579–Ile-603, and Ser-629–Ala-651. Positions Gln-11–Gly-27 are enriched in polar residues. Composition is skewed to low complexity over residues Asn-45–Asn-83 and Gln-126–Glu-167. A compositionally biased stretch (acidic residues) spans Gln-168–Glu-179. A compositionally biased stretch (low complexity) spans Asn-367 to Asn-449. Polar residues predominate over residues Thr-591–Ser-600. The Histidine kinase domain occupies Asn-1050–Ile-1276. A Response regulatory domain is found at Tyr-1519–Ile-1633.

In terms of processing, under osmotic stress conditions, this protein undergoes phosphorylation at a serine residue in the kinase core, which is not due to an autophosphorylation of dokA. This is in contrast to the classic two-component paradigm, which predicts only histidine and aspartate phosphorylation.

In terms of biological role, part of the osmoregulatory pathway which leads to the increase of intracellular cAMP concentration in response to hyperosmotic stress. Thought to negatively regulate the rdeA-regA pathway by acting as a phosphatase towards the HPt protein rdeA. Has probably no histidine kinase activity. In Dictyostelium discoideum (Social amoeba), this protein is Hybrid signal transduction protein dokA (dokA).